The sequence spans 659 residues: Biosynthetic arginine decarboxylase (659 aa).

K128 carries the N6-(pyridoxal phosphate)lysine modification. Residue 308-318 (FDVGGGLGVDY) participates in substrate binding.

Belongs to the Orn/Lys/Arg decarboxylase class-II family. SpeA subfamily. The cofactor is Mg(2+). Pyridoxal 5'-phosphate is required as a cofactor.

The enzyme catalyses L-arginine + H(+) = agmatine + CO2. Its pathway is amine and polyamine biosynthesis; agmatine biosynthesis; agmatine from L-arginine: step 1/1. Catalyzes the biosynthesis of agmatine from arginine. The polypeptide is Biosynthetic arginine decarboxylase (Yersinia pestis).